A 402-amino-acid chain; its full sequence is MSLYLKAEKIQSWRVLIMACAGFIFNTTEFVPVAMLSDIAQSFDMQTADTGLMMTVYAWTVLIMSLPAMLATGNMERKSLLIKLFIIFIVGHILLVIAWNFWILLLARMCIALAHSVFWSITASLVMRISPKHKKTQALGMLAIGTALATILGLPIGRIVGQLVGWRVTFGIIAVLALSIMFLIIRLLPNLPSKNAGSIASLPLLAKRPLLLWLYVTTAIVISAHFTAYTYIEPFMIDVGHLDPNFATAVLLVFGFSGIAASLLFNRLYRFAPTKFIVVSMSLLMFSLLLLLFSTEAIIAMFSLVFIWGIGISCIGLSLQMRVLKLAPDATDVATAIYSGIFNAGIGAGALFGNLATTYLGLNEIGYTGAALGLIGFIIFITTHLKYRHTFLLQNNKKITAL.

Transmembrane regions (helical) follow at residues 15–35 (VLIM…PVAM), 51–71 (GLMM…AMLA), 84–104 (LFII…FWIL), 109–129 (MCIA…VMRI), 137–157 (QALG…LPIG), 168–188 (VTFG…IRLL), 209–229 (PLLL…FTAY), 245–265 (NFAT…SLLF), 276–296 (FIVV…FSTE), 297–317 (AIIA…CIGL), 333–353 (VATA…ALFG), and 365–385 (IGYT…TTHL).

The protein belongs to the major facilitator superfamily. SotB (TC 2.A.1.2) family.

It is found in the cell inner membrane. Involved in the efflux of sugars. The physiological role may be the reduction of the intracellular concentration of toxic sugars or sugar metabolites. In Haemophilus influenzae (strain 86-028NP), this protein is Probable sugar efflux transporter.